The chain runs to 1000 residues: C-module-binding factor A (1000 aa).

In terms of domain architecture, JmjC spans 113–280; it reads PREWQEYLSH…ISYFSSLPHT (168 aa). The segment at 489–544 adopts a PHD-type; atypical zinc-finger fold; it reads KIKCHRCEKRFKKFSIIFCTNCNARFCEQCVVNTFGQNFQVLMKRNEWECFCCKGL. The RING-type; degenerate zinc finger occupies 492-542; the sequence is CHRCEKRFKKFSIIFCTNCNARFCEQCVVNTFGQNFQVLMKRNEWECFCCK. Disordered stretches follow at residues 561-647 and 660-818; these read RILN…SSYS and SYGS…KNLK. Low complexity-rich tracts occupy residues 574–647, 660–683, 700–710, 732–751, and 760–789; these read NNNN…SSYS, SYGS…NNNN, SSSSGSGSSNS, NNNN…NNHH, and NNNN…STST. The span at 805-818 shows a compositional bias: basic and acidic residues; it reads DNDKPKGRPPKNLK. Positions 810 to 818 form a DNA-binding region, a.T hook; it reads KGRPPKNLK.

In terms of assembly, monomer.

The protein resides in the nucleus. Its function is as follows. Transcriptional regulator involved in phagocytosis and pinocytosis. Both activates and represses transcription. Regulates expression of acaA, carA, pkaC, csaA, cotB and lagC. Promotes amplification of the tRNA gene-associated retrotransposon TRE5-A, a mobile genetic element formerly called as Dictyostelium repetitive element (DRE). Suppresses agnC and agnE encoding argonaute proteins which are part of a RNA interference pathway controlling TRE5-A amplification. Required for amplification of both sense and antisense RNA transcripts, but does not activate their promoters found in A-module and C-module of the TRE5-A, respectively. Nevertheless, binds to distinct DNA sequences containing A and T stretches within the C-module in vitro. The polypeptide is C-module-binding factor A (Dictyostelium discoideum (Social amoeba)).